Here is a 547-residue protein sequence, read N- to C-terminus: MAKRIIYNEQARRALEKGIDILTESVAVTLGPKGRNVVLEKKFGAPQIINDGVTIAKEIELEDHIENTGVSLIRQAASKTNDAAGDGTTTATVLAHAMVKAGLRNVAAGANAISLKRGIDQAAVFLVSKIEENAKPITDNNSIAQVGAISAGNDDEVGKMIADAMEKVGKEGVISLEEGKSMTTELEVTEGMRFDKGYISPYFATDTDRMEAVLEEPYILLTDKKIGLVQDLVPVLEAIARTGKPLLIIAEDIEKEALATLVVNRLRGVLNVAAVKAPGFGDRRKAMLEDMAVLTAGQLITEDAGLKIENAKIEMLGTARRITINKDTTTIVAEGNEVAVKARCEQIRKQMDETESTYDKEKLQERLAKLAGGVAVVKVGAATETEMKDKKLRLEDAINATKAAVEEGIVPGGGTTLAHLAPALTEWANQNLSGEELIGANIVAQALDAPLKRIAENAGANGSVVAENVRHKPFSEGFNAASNEYVDMLAAGIIDPAKVTRSGLQNAASIAGMVLTTECIVVDLPEKKEAAPAGGGMGGGMGGDFDY.

ATP contacts are provided by residues Thr29 to Pro32, Asp86 to Thr90, Gly413, Asn479 to Ala481, and Asp495.

The protein belongs to the chaperonin (HSP60) family. In terms of assembly, forms a cylinder of 14 subunits composed of two heptameric rings stacked back-to-back. Interacts with the co-chaperonin GroES.

The protein resides in the cytoplasm. It catalyses the reaction ATP + H2O + a folded polypeptide = ADP + phosphate + an unfolded polypeptide.. Its function is as follows. Together with its co-chaperonin GroES, plays an essential role in assisting protein folding. The GroEL-GroES system forms a nano-cage that allows encapsulation of the non-native substrate proteins and provides a physical environment optimized to promote and accelerate protein folding. The sequence is that of Chaperonin GroEL from Synechococcus sp. (strain RCC307).